A 292-amino-acid polypeptide reads, in one-letter code: MRGVIVPIVTPFKEDYSIDVPALEEHLDYLQKVGVHGIFINATTGEFTSLSKEERRFLAEKGRELVTSAFYLVGTASSNTLEVIELTKHAQDIGADYAVIAPPYYCPLTEEALFRHYSMIAEKTDIPIILYNIPACANSLSVPLVKRLTIEYPSIAGIKATLDSVNYIRDIILDVKGERKDFRVFTGLDQHFLNTLILGGDGGIMACANFAPELHLRLYKAFNEKRFEEAFEYSRKLAKLSKVYDIASSFGSAIKLAMRVRGFSIKPVLRPPYTMDGKEVEEKVRALLLEVL.

Catalysis depends on charge relay system residues T43 and Y105. The active-site Proton donor is Y131. K159 acts as the Schiff-base intermediate with substrate in catalysis.

Belongs to the DapA family. In terms of assembly, homotetramer.

Its subcellular location is the cytoplasm. This is an uncharacterized protein from Thermococcus kodakarensis (strain ATCC BAA-918 / JCM 12380 / KOD1) (Pyrococcus kodakaraensis (strain KOD1)).